Consider the following 199-residue polypeptide: Holliday junction branch migration complex subunit RuvA (199 aa).

Positions 1 to 64 are domain I; it reads MIALLTGKLA…EDAINLYGFR (64 aa). The domain II stretch occupies residues 65–143; the sequence is TQQEKELFQL…KLGLAQPQAG (79 aa). The tract at residues 144–148 is flexible linker; it reads GATAP. Positions 149–199 are domain III; sequence AKQEIRDDVLSALINLGYKEAVVQKALAELKVTEDATVELVLKQALKILMK.

This sequence belongs to the RuvA family. Homotetramer. Forms an RuvA(8)-RuvB(12)-Holliday junction (HJ) complex. HJ DNA is sandwiched between 2 RuvA tetramers; dsDNA enters through RuvA and exits via RuvB. An RuvB hexamer assembles on each DNA strand where it exits the tetramer. Each RuvB hexamer is contacted by two RuvA subunits (via domain III) on 2 adjacent RuvB subunits; this complex drives branch migration. In the full resolvosome a probable DNA-RuvA(4)-RuvB(12)-RuvC(2) complex forms which resolves the HJ.

Its subcellular location is the cytoplasm. The RuvA-RuvB-RuvC complex processes Holliday junction (HJ) DNA during genetic recombination and DNA repair, while the RuvA-RuvB complex plays an important role in the rescue of blocked DNA replication forks via replication fork reversal (RFR). RuvA specifically binds to HJ cruciform DNA, conferring on it an open structure. The RuvB hexamer acts as an ATP-dependent pump, pulling dsDNA into and through the RuvAB complex. HJ branch migration allows RuvC to scan DNA until it finds its consensus sequence, where it cleaves and resolves the cruciform DNA. The protein is Holliday junction branch migration complex subunit RuvA of Geobacter sp. (strain M21).